The sequence spans 243 residues: Phosphatidylserine decarboxylase proenzyme (243 aa).

Ser-212 serves as the catalytic Schiff-base intermediate with substrate; via pyruvic acid. Residue Ser-212 is modified to Pyruvic acid (Ser); by autocatalysis.

Belongs to the phosphatidylserine decarboxylase family. PSD-A subfamily. Heterodimer of a large membrane-associated beta subunit and a small pyruvoyl-containing alpha subunit. Pyruvate is required as a cofactor. In terms of processing, is synthesized initially as an inactive proenzyme. Formation of the active enzyme involves a self-maturation process in which the active site pyruvoyl group is generated from an internal serine residue via an autocatalytic post-translational modification. Two non-identical subunits are generated from the proenzyme in this reaction, and the pyruvate is formed at the N-terminus of the alpha chain, which is derived from the carboxyl end of the proenzyme. The post-translation cleavage follows an unusual pathway, termed non-hydrolytic serinolysis, in which the side chain hydroxyl group of the serine supplies its oxygen atom to form the C-terminus of the beta chain, while the remainder of the serine residue undergoes an oxidative deamination to produce ammonia and the pyruvoyl prosthetic group on the alpha chain.

Its subcellular location is the cell membrane. The catalysed reaction is a 1,2-diacyl-sn-glycero-3-phospho-L-serine + H(+) = a 1,2-diacyl-sn-glycero-3-phosphoethanolamine + CO2. The protein operates within phospholipid metabolism; phosphatidylethanolamine biosynthesis; phosphatidylethanolamine from CDP-diacylglycerol: step 2/2. Its function is as follows. Catalyzes the formation of phosphatidylethanolamine (PtdEtn) from phosphatidylserine (PtdSer). This chain is Phosphatidylserine decarboxylase proenzyme, found in Mycobacterium leprae (strain Br4923).